Here is a 397-residue protein sequence, read N- to C-terminus: MSESVHTNTSLWSKGMKAVIVAQFLSAFGDNALLFATLALLKAQFYPEWSQPILQMVFVGAYILFAPFVGQVADSFAKGRVMMFANGLKLLGAASICFGINPFLGYTLVGVGAAAYSPAKYGILGELTTGSKLVKANGLMEASTIAAILLGSVAGGVLADWHVLVALAACALAYGGAVVANIYIPKLAAARPGQSWNLINMTRSFLNACTSLWRNGETRFSLVGTSLFWGAGVTLRFLLVLWVPVALGITDNSTPTYLNAMVAIGIVVGAGAAAKLVTLETVSRCMPAGILIGVVVLIFSLQHELLPAYALLMLIGVMGGFFVVPLNALLQERGKKSVGAGNAIAVQNLGENSAMLLMLGIYSLAVMVGIPVVPIGIGFGALFALAITALWIWQRRH.

Residues methionine 1 to lysine 17 lie on the Periplasmic side of the membrane. A helical transmembrane segment spans residues alanine 18–leucine 38. Topologically, residues alanine 39–proline 52 are cytoplasmic. Residues isoleucine 53–alanine 73 traverse the membrane as a helical segment. At aspartate 74–leucine 90 the chain is on the periplasmic side. Residues leucine 91–valine 111 form a helical membrane-spanning segment. The Cytoplasmic portion of the chain corresponds to glycine 112–threonine 144. Residues isoleucine 145–valine 165 traverse the membrane as a helical segment. Alanine 166 is a topological domain (periplasmic). Residues leucine 167–leucine 187 traverse the membrane as a helical segment. Residues alanine 188 to serine 226 are Cytoplasmic-facing. Residues leucine 227–leucine 247 form a helical membrane-spanning segment. Over glycine 248–threonine 256 the chain is Periplasmic. Residues tyrosine 257 to valine 277 form a helical membrane-spanning segment. Topologically, residues threonine 278–glutamate 280 are cytoplasmic. Residues threonine 281–leucine 301 form a helical membrane-spanning segment. Residues glutamine 302–glutamate 304 lie on the Periplasmic side of the membrane. A helical transmembrane segment spans residues leucine 305–proline 325. At leucine 326 to alanine 343 the chain is on the cytoplasmic side. A helical membrane pass occupies residues isoleucine 344–leucine 364. Over alanine 365–valine 366 the chain is Periplasmic. The helical transmembrane segment at methionine 367–isoleucine 387 threads the bilayer. Over threonine 388 to histidine 397 the chain is Cytoplasmic.

The protein belongs to the major facilitator superfamily. LplT (TC 2.A.1.42) family.

Its subcellular location is the cell inner membrane. Functionally, catalyzes the facilitated diffusion of 2-acyl-glycero-3-phosphoethanolamine (2-acyl-GPE) into the cell. This is Lysophospholipid transporter LplT from Shigella boydii serotype 4 (strain Sb227).